A 62-amino-acid polypeptide reads, in one-letter code: MAKKLKIKLVKSPIGYNRRQRATLKALGLRKISDEVVHDDSPQIRGMINAVIHMLEVKEIEN.

Belongs to the universal ribosomal protein uL30 family. Part of the 50S ribosomal subunit.

The protein is Large ribosomal subunit protein uL30 of Kosmotoga olearia (strain ATCC BAA-1733 / DSM 21960 / TBF 19.5.1).